The chain runs to 163 residues: NAD(P)H-quinone oxidoreductase subunit I, chloroplastic (163 aa).

2 4Fe-4S ferredoxin-type domains span residues 55-84 (GRIH…VDWK) and 95-124 (LNYS…MTEE). 8 residues coordinate [4Fe-4S] cluster: Cys-64, Cys-67, Cys-70, Cys-74, Cys-104, Cys-107, Cys-110, and Cys-114.

It belongs to the complex I 23 kDa subunit family. As to quaternary structure, NDH is composed of at least 16 different subunits, 5 of which are encoded in the nucleus. [4Fe-4S] cluster serves as cofactor.

The protein localises to the plastid. It is found in the chloroplast thylakoid membrane. The catalysed reaction is a plastoquinone + NADH + (n+1) H(+)(in) = a plastoquinol + NAD(+) + n H(+)(out). It carries out the reaction a plastoquinone + NADPH + (n+1) H(+)(in) = a plastoquinol + NADP(+) + n H(+)(out). Its function is as follows. NDH shuttles electrons from NAD(P)H:plastoquinone, via FMN and iron-sulfur (Fe-S) centers, to quinones in the photosynthetic chain and possibly in a chloroplast respiratory chain. The immediate electron acceptor for the enzyme in this species is believed to be plastoquinone. Couples the redox reaction to proton translocation, and thus conserves the redox energy in a proton gradient. The polypeptide is NAD(P)H-quinone oxidoreductase subunit I, chloroplastic (Glycine max (Soybean)).